A 231-amino-acid chain; its full sequence is Large ribosomal subunit protein uL1 (231 aa).

It belongs to the universal ribosomal protein uL1 family. Part of the 50S ribosomal subunit.

In terms of biological role, binds directly to 23S rRNA. The L1 stalk is quite mobile in the ribosome, and is involved in E site tRNA release. Protein L1 is also a translational repressor protein, it controls the translation of the L11 operon by binding to its mRNA. The sequence is that of Large ribosomal subunit protein uL1 from Shouchella clausii (strain KSM-K16) (Alkalihalobacillus clausii).